The chain runs to 370 residues: MKGGSMEKIKPILAIISLQFGYAGMYIITMVSFKHGMDHWVLATYRHVVATVVMAPFALMFERKIRPKMTLAIFWRLLALGILEPLMDQNLYYIGLKNTSASYTSAFTNALPAVTFILALIFRLETVNFRKVHSVAKVVGTVITVGGAMIMTLYKGPAIEIVKAAHNSFHGGSSSTPTGQHWVLGTIAIMGSISTWAAFFILQSYTLKVYPAELSLVTLICGIGTILNAIASLIMVRDPSAWKIGMDSGTLAAVYSGVVCSGIAYYIQSIVIKQRGPVFTTSFSPMCMIITAFLGALVLAEKIHLGSIIGAVFIVLGLYSVVWGKSKDEVNPLDEKIVAKSQELPITNVVKQTNGHDVSGAPTNGVVTST.

10 helical membrane-spanning segments follow: residues 11–31 (PILA…ITMV), 41–61 (VLAT…ALMF), 67–87 (PKMT…EPLM), 102–122 (SYTS…ALIF), 142–162 (VITV…IEIV), 182–202 (WVLG…FFIL), 216–236 (LVTL…LIMV), 252–272 (AAVY…SIVI), 278–298 (VFTT…GALV), and 303–323 (IHLG…SVVW). 2 consecutive EamA domains span residues 23 to 143 (AGMY…GTVI) and 195 to 322 (TWAA…YSVV).

This sequence belongs to the drug/metabolite transporter (DMT) superfamily. Plant drug/metabolite exporter (P-DME) (TC 2.A.7.4) family.

Its subcellular location is the membrane. The chain is WAT1-related protein At1g44800 from Arabidopsis thaliana (Mouse-ear cress).